A 338-amino-acid polypeptide reads, in one-letter code: Probable tRNA pseudouridine synthase B (338 aa).

Catalysis depends on D78, which acts as the Nucleophile. The PUA domain occupies 245–320; it reads LPKIILRDSA…LAATSVRIMM (76 aa).

It belongs to the pseudouridine synthase TruB family. Type 2 subfamily.

The catalysed reaction is uridine(55) in tRNA = pseudouridine(55) in tRNA. In terms of biological role, could be responsible for synthesis of pseudouridine from uracil-55 in the psi GC loop of transfer RNAs. The sequence is that of Probable tRNA pseudouridine synthase B from Methanosarcina barkeri (strain Fusaro / DSM 804).